The primary structure comprises 127 residues: Aspartate 1-decarboxylase (127 aa).

Ser25 acts as the Schiff-base intermediate with substrate; via pyruvic acid in catalysis. Position 25 is a pyruvic acid (Ser) (Ser25). Thr57 contributes to the substrate binding site. Tyr58 acts as the Proton donor in catalysis. 73 to 75 (GAA) provides a ligand contact to substrate.

It belongs to the PanD family. In terms of assembly, heterooctamer of four alpha and four beta subunits. Requires pyruvate as cofactor. Is synthesized initially as an inactive proenzyme, which is activated by self-cleavage at a specific serine bond to produce a beta-subunit with a hydroxyl group at its C-terminus and an alpha-subunit with a pyruvoyl group at its N-terminus.

The protein localises to the cytoplasm. It carries out the reaction L-aspartate + H(+) = beta-alanine + CO2. Its pathway is cofactor biosynthesis; (R)-pantothenate biosynthesis; beta-alanine from L-aspartate: step 1/1. In terms of biological role, catalyzes the pyruvoyl-dependent decarboxylation of aspartate to produce beta-alanine. In Staphylococcus carnosus (strain TM300), this protein is Aspartate 1-decarboxylase.